We begin with the raw amino-acid sequence, 336 residues long: Phytochrome A-associated F-box protein (336 aa).

Residues 3–55 (ESVFSCIPEDVVFNIFFKLQDDPRNWARLACVCTKFSSIVRNVCCKTQCYSAI) enclose the F-box domain. Residues 197–201 (RKRRK) carry the Nuclear localization signal motif.

As to quaternary structure, probable component of an E3 ubiquitin ligase SCF complex. Interacts with SKP1A/ASK1 and SKP1B/ASK2.

The protein localises to the nucleus. Its pathway is protein modification; protein ubiquitination. In terms of biological role, component of SCF(ASK-cullin-F-box) E3 ubiquitin ligase complexes, which may mediate the ubiquitination and subsequent proteasomal degradation of target proteins. Negative regulator of the phyA signaling pathway that shifts the responsiveness of the phyA signaling system associated with hypocotyl elongation from red to far-red wavelength. The chain is Phytochrome A-associated F-box protein (EID1) from Arabidopsis thaliana (Mouse-ear cress).